The primary structure comprises 586 residues: Protein HOL1 (586 aa).

At 1–66 (MDKYTNRDHP…NWSSWRKLAH (66 aa)) the chain is on the extracellular side. The helical transmembrane segment at 67 to 87 (FGLMAFITAFTAATSNDAGAA) threads the bilayer. At 88-103 (QDSLNEIYGISYDSMN) the chain is on the cytoplasmic side. The chain crosses the membrane as a helical span at residues 104 to 124 (TGAGVLFLGIGWSTLFLAPFA). The Extracellular segment spans residues 125-130 (NLYGRK). Residues 131 to 151 (ITYIVCTTLGLFGALWFALAK) form a helical membrane-spanning segment. Residues 152–189 (RTSDTIWSQLFVGISESCAEAQVQLSLSDIFFQHQLGS) lie on the Cytoplasmic side of the membrane. Residues 190–210 (VLTVYIMCTSIGTFLGPLIAG) form a helical membrane-spanning segment. Residues 211–219 (YISAFTNFR) lie on the Extracellular side of the membrane. A helical membrane pass occupies residues 220–240 (WVGWVAVIISGGLLITIIFGC). The Cytoplasmic portion of the chain corresponds to 241-362 (EETYFDRGQY…YFKYLKINLR (122 aa)). Residues 363-383 (MFLFPPVWLSGMFWGIQDVFL) traverse the membrane as a helical segment. Residues 384-413 (TFYLTTQESAYYEPPWNYSDFGVAIMNVPT) lie on the Extracellular side of the membrane. Residues 414–434 (LIGAVIGCICAGIVSDYFVLW) form a helical membrane-spanning segment. Topologically, residues 435–448 (MARHNRGILEAEFR) are cytoplasmic. A helical transmembrane segment spans residues 449 to 469 (LYFSIATAIIGPAGLLMFGIG). The Extracellular portion of the chain corresponds to 470 to 477 (TARQWPWQ). The chain crosses the membrane as a helical span at residues 478 to 498 (AIYVGLGFVGFAWGCSGDIAM). Residues 499-508 (AYLMDCYPDM) lie on the Cytoplasmic side of the membrane. A helical membrane pass occupies residues 509-529 (VLEGMVCTAIINNTISCIFTF). The Extracellular segment spans residues 530 to 544 (TCSDWLAASGTENTY). Residues 545–565 (IALAVINFGITAFALPMYYYG) traverse the membrane as a helical segment. At 566–586 (KRIRLWTKRWYLQSVNLRDGV) the chain is on the cytoplasmic side.

Its subcellular location is the membrane. Seems to be involved in the uptake of several cations and of histidinol. The protein is Protein HOL1 (HOL1) of Saccharomyces cerevisiae (strain ATCC 204508 / S288c) (Baker's yeast).